We begin with the raw amino-acid sequence, 167 residues long: Novel acetylcholine receptor chaperone (167 aa).

At 1-5 (MASPR) the chain is on the cytoplasmic side. The chain crosses the membrane as a helical span at residues 6 to 26 (TVTIVALSVALGLFFVFMGTI). Residues 27 to 61 (KLTPRLSKDAYSEMKRAYKSYVRALPLLKKMGINS) lie on the Lumenal side of the membrane. The interaction with NGFR stretch occupies residues 43–54 (AYKSYVRALPLL). A helical membrane pass occupies residues 62-82 (ILLRKSIGALEVACGIVMTLV). The Cytoplasmic portion of the chain corresponds to 83 to 88 (PGRPKD). A helical transmembrane segment spans residues 89–109 (VANFFLLLLVLAVLFFHQLVG). Topologically, residues 110–114 (DPLKR) are lumenal. The chain crosses the membrane as a helical span at residues 115–132 (YAHALVFGILLTCRLLIA). The Cytoplasmic portion of the chain corresponds to 133–167 (RKPEDRSSEKKPLPGNAEEQPSLYEKAPQGKVKVS). The disordered stretch occupies residues 136 to 167 (EDRSSEKKPLPGNAEEQPSLYEKAPQGKVKVS).

It belongs to the DoxX family. In terms of assembly, may interact with NGFR. Interacts with RPN1, RPN2 and CANX.

Its subcellular location is the peroxisome membrane. The protein resides in the cytoplasmic vesicle. The protein localises to the endoplasmic reticulum membrane. In terms of biological role, molecular chaperone which mediates the proper assembly and functional expression of the nicotinic acetylcholine receptors (nAChRs) throughout the brain. Essential for the proper folding, assembly, function and surface trafficking of alpha-7 (CHRNA7), alpha-4-beta-2, alpha-3-beta-2 and alpha-3-beta-4 receptors. Stably associates with ribophorin-1 (RPN1) and ribophorin-2 (RPN2) (components of the oligosaccharyl transferase (OST) complex) and with calnexin (CANX), both of which are critical for NACHO-mediated effects on CHRNA7 assembly and function. Facilitates the proper folding and assembly of alpha-6-beta-2 and alpha-6-beta-2-beta-3 receptors and acts at early stages of the nAChRs subunit assembly. Promotes the expression of the alpha-4(2):beta-2(3) stoichiometric form over the alpha-4(3):beta-2(2) form. In Macaca fascicularis (Crab-eating macaque), this protein is Novel acetylcholine receptor chaperone (TMEM35A).